Here is a 435-residue protein sequence, read N- to C-terminus: Chaperone SurA (435 aa).

The N-terminal stretch at 1 to 24 (MRLRSFAFLGFMLLVAMAPSMASA) is a signal peptide. 2 PpiC domains span residues 173-274 (DTAY…KLID) and 286-385 (VTEN…ELED).

The protein resides in the periplasm. It catalyses the reaction [protein]-peptidylproline (omega=180) = [protein]-peptidylproline (omega=0). Its function is as follows. Chaperone involved in the correct folding and assembly of outer membrane proteins. Recognizes specific patterns of aromatic residues and the orientation of their side chains, which are found more frequently in integral outer membrane proteins. May act in both early periplasmic and late outer membrane-associated steps of protein maturation. This Chromohalobacter salexigens (strain ATCC BAA-138 / DSM 3043 / CIP 106854 / NCIMB 13768 / 1H11) protein is Chaperone SurA.